The following is a 1289-amino-acid chain: SH3 domain and tetratricopeptide repeat-containing protein 2 (1289 aa).

SH3 domains lie at 176-239 (EGHF…PLPV) and 267-330 (IGRG…LDSC). The segment at 393–442 (SQPEGFREARSGGTWMERQTIGSRRSSGSGDSSPEEDELISASSDSYHLP) is disordered. Low complexity predominate over residues 414–424 (GSRRSSGSGDS). TPR repeat units follow at residues 529–562 (ARLC…LDGA), 758–791 (RTLC…GKLL), 837–870 (GVVH…AREM), 1002–1038 (GQLL…FVDL), 1085–1119 (LKLY…LARR), 1120–1153 (MKAL…ATLA), 1167–1200 (LVAF…CPPW), and 1211–1245 (AKVY…AVLM).

The polypeptide is SH3 domain and tetratricopeptide repeat-containing protein 2 (Sh3tc2) (Mus musculus (Mouse)).